Reading from the N-terminus, the 43-residue chain is Neurotrophin-3 (43 aa).

This sequence belongs to the NGF-beta family.

It is found in the secreted. In terms of biological role, seems to promote the survival of visceral and proprioceptive sensory neurons. The sequence is that of Neurotrophin-3 (ntf3) from Raja clavata (Thornback ray).